Here is a 1843-residue protein sequence, read N- to C-terminus: Protein TIC 214 (1843 aa).

The next 6 membrane-spanning stretches (helical) occupy residues 18 to 38 (IINS…FSIG), 64 to 84 (FITG…HLAL), 87 to 107 (PHTI…WNNH), 124 to 144 (LSIQ…HFIL), 172 to 192 (VGWL…LFWI), and 217 to 237 (IFSI…PSPI). 5 disordered regions span residues 244-281 (ETSK…AAEK), 557-576 (EEIE…SRKA), 582-647 (FTDN…DEVA), 724-744 (NSEE…RQEN), and 1527-1586 (SLEL…KKKK). The segment covering 251-264 (REESEEETDVEIET) has biased composition (acidic residues). Residues 269–281 (KGTKQEQEGAAEK) are compositionally biased toward basic and acidic residues. Residues 590–639 (NTPTSTTETTSTAETTSTTETTSTTKNTSTTKNTSTTETTSTTENENTSN) are compositionally biased toward low complexity. 2 stretches are compositionally biased toward basic and acidic residues: residues 730–744 (TKEK…RQEN) and 1527–1540 (SLEL…KKPA). Residues 1543 to 1562 (NIGSDTQKQGNPGSDPSTQQ) are compositionally biased toward polar residues. Basic and acidic residues predominate over residues 1563–1580 (KDIKKNVKEDYDGRSDIQ).

This sequence belongs to the TIC214 family. As to quaternary structure, part of the Tic complex.

It is found in the plastid. The protein localises to the chloroplast inner membrane. Functionally, involved in protein precursor import into chloroplasts. May be part of an intermediate translocation complex acting as a protein-conducting channel at the inner envelope. The sequence is that of Protein TIC 214 from Nandina domestica (Heavenly bamboo).